We begin with the raw amino-acid sequence, 395 residues long: uncharacterized protein (395 aa).

Residues 1–18 (MKHVIMLYFIAAATLFSS) form the signal peptide. A lipid anchor (N-palmitoyl cysteine) is attached at Cys-19. Cys-19 carries S-diacylglycerol cysteine lipidation.

The protein resides in the cell outer membrane. Functionally, may be involved in ulvan degradation. Ulvan is the main polysaccharide component of the Ulvales (green seaweed) cell wall. It is composed of disaccharide building blocks comprising 3-sulfated rhamnose (Rha3S) linked to D-glucuronic acid (GlcA), L-iduronic acid (IduA), or D-xylose (Xyl). This is an uncharacterized protein from Formosa agariphila (strain DSM 15362 / KCTC 12365 / LMG 23005 / KMM 3901 / M-2Alg 35-1).